Here is a 139-residue protein sequence, read N- to C-terminus: ATP synthase epsilon chain 2 (139 aa).

It belongs to the ATPase epsilon chain family. In terms of assembly, F-type ATPases have 2 components, CF(1) - the catalytic core - and CF(0) - the membrane proton channel. CF(1) has five subunits: alpha(3), beta(3), gamma(1), delta(1), epsilon(1). CF(0) has three main subunits: a, b and c.

It localises to the cell inner membrane. Functionally, produces ATP from ADP in the presence of a proton gradient across the membrane. The chain is ATP synthase epsilon chain 2 (atpC2) from Ralstonia nicotianae (strain ATCC BAA-1114 / GMI1000) (Ralstonia solanacearum).